The following is a 204-amino-acid chain: Dual-action ribosomal maturation protein DarP (204 aa).

2 disordered regions span residues 1–31 and 182–204; these read MPPMTRKTRIQPIEPVAEEDDNGYDRPSKSQ and GGASDSDDEAADDAGDDHDDDEA. Acidic residues predominate over residues 186–204; sequence DSDDEAADDAGDDHDDDEA.

This sequence belongs to the DarP family.

It localises to the cytoplasm. Member of a network of 50S ribosomal subunit biogenesis factors which assembles along the 30S-50S interface, preventing incorrect 23S rRNA structures from forming. Promotes peptidyl transferase center (PTC) maturation. The protein is Dual-action ribosomal maturation protein DarP of Burkholderia orbicola (strain MC0-3).